We begin with the raw amino-acid sequence, 244 residues long: Glutathione S-transferase theta-2 (244 aa).

Residues 2 to 82 (GLELYLDLLS…YLSSKYQVAD (81 aa)) form the GST N-terminal domain. Residues 40-41 (HM), 53-54 (KV), 66-67 (ES), and 104-107 (DNIR) contribute to the glutathione site. The GST C-terminal domain occupies 88-230 (DLQARAQVHE…AKKMLPVPPP (143 aa)).

Belongs to the GST superfamily. Theta family. Homodimer. In liver, highest expression found in central vein limiting plate hepatocytes. Also expressed in interlobular bile duct epithelial cells. In lung, expressed in club cells and ciliated cells of the bronchiolar epithelium and in type II alveolar cells of the lung parenchyma.

The protein localises to the cytoplasm. It localises to the cytosol. It is found in the nucleus. The catalysed reaction is RX + glutathione = an S-substituted glutathione + a halide anion + H(+). Its function is as follows. Conjugation of reduced glutathione to a wide number of exogenous and endogenous hydrophobic electrophiles. The polypeptide is Glutathione S-transferase theta-2 (Mus musculus (Mouse)).